The following is a 66-amino-acid chain: Muscarinic toxin 1 (66 aa).

Intrachain disulfides connect Cys3/Cys24, Cys17/Cys42, Cys46/Cys58, and Cys59/Cys64.

It belongs to the three-finger toxin family. Short-chain subfamily. Aminergic toxin sub-subfamily. As to expression, expressed by the venom gland.

It localises to the secreted. Shows a non-competitive interaction with adrenergic and muscarinic receptors. Binds to alpha-2b (ADRA2B) (IC(50)=2.3 nM), alpha-1a (ADRA1A), alpha-1b (ADRA1B), and alpha-2c (ADRA2C) adrenergic receptors. Reversibly binds to M1 (CHRM1) muscarinic acetylcholine receptors, probably by interacting with the orthosteric site. Also reveals a slightly weaker effect at M3 (CHRM3) and M4 (CHRM4) receptors. The order of potency is ADRA2B&gt;&gt;CHRM1&gt;ADRA1A&gt;ADRA1B&gt;ADRA2C/CHRM4. This chain is Muscarinic toxin 1, found in Dendroaspis angusticeps (Eastern green mamba).